The chain runs to 451 residues: uncharacterized protein (451 aa).

The TRAM domain maps to 1–59 (MLKKNDIVEVEISDLSHDGAGIAKVDGLVFFVDNALPTEKIRMRVLKVKKNIAFGKVES). Q283, Y312, E333, and D381 together coordinate S-adenosyl-L-methionine. C408 functions as the Nucleophile in the catalytic mechanism.

The protein belongs to the class I-like SAM-binding methyltransferase superfamily. RNA M5U methyltransferase family.

This is an uncharacterized protein from Streptococcus mutans serotype c (strain ATCC 700610 / UA159).